A 281-amino-acid polypeptide reads, in one-letter code: sn-glycerol-3-phosphate transport system permease protein UgpE (281 aa).

6 consecutive transmembrane segments (helical) span residues 16-36 (LILGIAVILFPLYVAFVAATL), 85-105 (FSITVGKITVSMLSAFAIVWF), 113-133 (FFWMIFITLMLPVEVRIFPTV), 142-162 (LNSYAGLTLPLMASATATFLF), 202-222 (ALFVITFIYGWNQYLWPLLII), and 247-267 (WNQVMAAMLLTLIPPVVIVLA). The 192-residue stretch at 77-268 (MLNSFIMAFS…IPPVVIVLAM (192 aa)) folds into the ABC transmembrane type-1 domain.

Belongs to the binding-protein-dependent transport system permease family. UgpAE subfamily. In terms of assembly, the complex is composed of two ATP-binding proteins (UgpC), two transmembrane proteins (UgpA and UgpE) and a solute-binding protein (UgpB).

Its subcellular location is the cell inner membrane. Functionally, part of the ABC transporter complex UgpBAEC involved in sn-glycerol-3-phosphate (G3P) import. Probably responsible for the translocation of the substrate across the membrane. This chain is sn-glycerol-3-phosphate transport system permease protein UgpE (ugpE), found in Salmonella typhi.